The primary structure comprises 195 residues: Shikimate kinase (195 aa).

ATP is bound at residue 30–35 (GAGKTA). Position 34 (Thr34) interacts with Mg(2+). Asp52, Arg76, and Gly98 together coordinate substrate. Arg136 is a binding site for ATP. Arg155 is a substrate binding site.

This sequence belongs to the shikimate kinase family. As to quaternary structure, monomer. Mg(2+) is required as a cofactor.

Its subcellular location is the cytoplasm. It carries out the reaction shikimate + ATP = 3-phosphoshikimate + ADP + H(+). It functions in the pathway metabolic intermediate biosynthesis; chorismate biosynthesis; chorismate from D-erythrose 4-phosphate and phosphoenolpyruvate: step 5/7. In terms of biological role, catalyzes the specific phosphorylation of the 3-hydroxyl group of shikimic acid using ATP as a cosubstrate. In Ruegeria pomeroyi (strain ATCC 700808 / DSM 15171 / DSS-3) (Silicibacter pomeroyi), this protein is Shikimate kinase.